The following is a 290-amino-acid chain: ATP synthase gamma chain (290 aa).

This sequence belongs to the ATPase gamma chain family. In terms of assembly, F-type ATPases have 2 components, CF(1) - the catalytic core - and CF(0) - the membrane proton channel. CF(1) has five subunits: alpha(3), beta(3), gamma(1), delta(1), epsilon(1). CF(0) has three main subunits: a, b and c.

Its subcellular location is the cell inner membrane. Produces ATP from ADP in the presence of a proton gradient across the membrane. The gamma chain is believed to be important in regulating ATPase activity and the flow of protons through the CF(0) complex. The protein is ATP synthase gamma chain of Gemmatimonas aurantiaca (strain DSM 14586 / JCM 11422 / NBRC 100505 / T-27).